Consider the following 490-residue polypeptide: Protein nucleotidyltransferase YdiU (490 aa).

8 residues coordinate ATP: G94, G96, R97, K117, D129, G130, R180, and R187. D256 (proton acceptor) is an active-site residue. Residues N257 and D266 each contribute to the Mg(2+) site. D266 serves as a coordination point for ATP.

Belongs to the SELO family. Mg(2+) is required as a cofactor. Requires Mn(2+) as cofactor.

The catalysed reaction is L-seryl-[protein] + ATP = 3-O-(5'-adenylyl)-L-seryl-[protein] + diphosphate. It catalyses the reaction L-threonyl-[protein] + ATP = 3-O-(5'-adenylyl)-L-threonyl-[protein] + diphosphate. It carries out the reaction L-tyrosyl-[protein] + ATP = O-(5'-adenylyl)-L-tyrosyl-[protein] + diphosphate. The enzyme catalyses L-histidyl-[protein] + UTP = N(tele)-(5'-uridylyl)-L-histidyl-[protein] + diphosphate. The catalysed reaction is L-seryl-[protein] + UTP = O-(5'-uridylyl)-L-seryl-[protein] + diphosphate. It catalyses the reaction L-tyrosyl-[protein] + UTP = O-(5'-uridylyl)-L-tyrosyl-[protein] + diphosphate. Its function is as follows. Nucleotidyltransferase involved in the post-translational modification of proteins. It can catalyze the addition of adenosine monophosphate (AMP) or uridine monophosphate (UMP) to a protein, resulting in modifications known as AMPylation and UMPylation. The polypeptide is Protein nucleotidyltransferase YdiU (Clostridium beijerinckii (strain ATCC 51743 / NCIMB 8052) (Clostridium acetobutylicum)).